A 1121-amino-acid chain; its full sequence is Linoleate 10R-lipoxygenase (1121 aa).

Residues 1 to 66 (MLRRFSSTFK…NEKKGNSVSP (66 aa)) form a disordered region. Low complexity predominate over residues 22 to 36 (TASSSSAAVANTNNN). Basic and acidic residues predominate over residues 50-61 (SSSDDDRNEKKG). His-253 (proton acceptor) is an active-site residue. Ca(2+)-binding residues include Asp-254, Ser-269, Tyr-271, Asp-273, and Ser-275.

Belongs to the peroxidase family.

It catalyses the reaction (9Z,12Z)-octadecadienoate + O2 = (8E,10R,12Z)-10-hydroperoxyoctadeca-8,12-dienoate. Functionally, responsible for the synthesis of various fatty acid-derived oxylipins. Oxidizes linoleic acid primarily to 10R-hydroperoxy-8,12-octadecadienoic acid (10R-HPODE) and, to a lesser extent, 8R-hydroperoxylinoleic acid (8R-HPODE). Also synthesizes 10-hydroxy-octadeca-8,12-dienoic acid (10-HODE) from linoleic acid and primarily 8R-hydroxy-octadeca-9-monoenoic acid (8-HOME, also known as psiB beta) from oleic acid. 8-HOME forms part of psi factor, a mixture of oxylipins that regulates the balance between sexual and asexual spore production. Displays epoxyalcohol synthase activity. Plays a role in the synthesis of prostaglandins which may be required for pathogenicity. The chain is Linoleate 10R-lipoxygenase from Aspergillus fumigatus (strain ATCC MYA-4609 / CBS 101355 / FGSC A1100 / Af293) (Neosartorya fumigata).